The sequence spans 285 residues: RNA exonuclease 4 (285 aa).

Polar residues predominate over residues 1–14 (MAKLSQNWKKLSSK). Positions 1 to 35 (MAKLSQNWKKLSSKIQDKPKNGSVKKPTLKGKISK) are disordered. In terms of domain architecture, Exonuclease spans 116–267 (YVAIDCEFVG…EDARATMLLF (152 aa)).

The protein belongs to the REXO4 family.

It localises to the nucleus. Exoribonuclease involved in ribosome biosynthesis. Involved in the processing of ITS1, the internal transcribed spacer localized between the 18S and 5.8S rRNAs. This chain is RNA exonuclease 4 (REX4), found in Candida albicans (strain SC5314 / ATCC MYA-2876) (Yeast).